Here is a 284-residue protein sequence, read N- to C-terminus: Polyamine aminopropyltransferase (284 aa).

Positions 4 to 238 (EVWNTERLHD…GPMALGWGSH (235 aa)) constitute a PABS domain. Gln33 provides a ligand contact to S-methyl-5'-thioadenosine. His64 and Asp88 together coordinate spermidine. S-methyl-5'-thioadenosine contacts are provided by residues Glu108 and 140-141 (DG). Asp158 serves as the catalytic Proton acceptor. Position 158-161 (158-161 (DSTD)) interacts with spermidine. S-methyl-5'-thioadenosine is bound at residue Pro165.

It belongs to the spermidine/spermine synthase family. As to quaternary structure, homodimer or homotetramer.

The protein localises to the cytoplasm. The catalysed reaction is S-adenosyl 3-(methylsulfanyl)propylamine + putrescine = S-methyl-5'-thioadenosine + spermidine + H(+). It participates in amine and polyamine biosynthesis; spermidine biosynthesis; spermidine from putrescine: step 1/1. Catalyzes the irreversible transfer of a propylamine group from the amino donor S-adenosylmethioninamine (decarboxy-AdoMet) to putrescine (1,4-diaminobutane) to yield spermidine. This Ruegeria sp. (strain TM1040) (Silicibacter sp.) protein is Polyamine aminopropyltransferase.